The chain runs to 1268 residues: Vigilin (1268 aa).

The residue at position 2 (Ser2) is an N-acetylserine. Thr8 bears the Phosphothreonine mark. Phosphoserine is present on residues Ser11, Ser31, and Ser35. 7 consecutive KH domains span residues 150 to 212, 222 to 284, 295 to 357, 364 to 424, 435 to 497, 507 to 570, and 581 to 643; these read QASA…RHEV, RAVK…VARI, TTTI…LTEV, FTVS…QEQI, MDYV…KREL, ERTK…TKYM, and SYSI…RSRI. A phosphothreonine mark is found at Thr295 and Thr296. Ser317 is subject to Phosphoserine. Tyr437 bears the Phosphotyrosine mark. Phosphoserine is present on Ser645. KH domains are found at residues 653-716, 727-790, 800-863, 873-967, 972-1034, 1052-1117, and 1127-1190; these read IAEV…KKQL, SFTV…QKEL, VVED…KKRI, QVTL…KEAL, PVTI…KAGL, SFKL…RDAI, and MVSE…IDHI. The interval 910–946 is disordered; sequence PDREENPVHSVEPSIQENGDEAGEGREAKETDPGSPR. A compositionally biased stretch (basic and acidic residues) spans 932–946; the sequence is GEGREAKETDPGSPR. An N6-acetyllysine modification is found at Lys991. The interval 1214–1268 is disordered; that stretch reads PAHEESKAPSKGFVVRDAPWTSNSSEKAPDMSSSEEIPTFGAQVAPKTLPWGPKR. Residues 1233-1249 show a composition bias toward polar residues; the sequence is WTSNSSEKAPDMSSSEE. Ser1247 bears the Phosphoserine mark.

The protein resides in the cytoplasm. Its subcellular location is the nucleus. Its function is as follows. Appears to play a role in cell sterol metabolism. It may function to protect cells from over-accumulation of cholesterol. This is Vigilin (Hdlbp) from Rattus norvegicus (Rat).